Reading from the N-terminus, the 257-residue chain is Protein KlaA (257 aa).

In terms of biological role, belongs to the kla operon, which is associated with cryptic tellurite resistance, and IncW plasmid fertility inhibition. This Escherichia coli protein is Protein KlaA (klaA).